Consider the following 93-residue polypeptide: Small ribosomal subunit protein uS19 (93 aa).

This sequence belongs to the universal ribosomal protein uS19 family.

Protein S19 forms a complex with S13 that binds strongly to the 16S ribosomal RNA. The polypeptide is Small ribosomal subunit protein uS19 (Desulfitobacterium hafniense (strain Y51)).